Consider the following 173-residue polypeptide: Mesencephalic astrocyte-derived neurotrophic factor homolog (173 aa).

The first 22 residues, 1–22 (MKTWYMVVVIGFLATLAQTSLA), serve as a signal peptide directing secretion. 4 cysteine pairs are disulfide-bonded: C28/C114, C31/C103, C61/C72, and C148/C151.

Belongs to the ARMET family.

The protein localises to the secreted. Required during the maturation of the embryonic nervous system for maintenance of neuronal and cuticular connectivity. Essential for maintenance of dopaminergic neurons and dopamine levels. The protein is Mesencephalic astrocyte-derived neurotrophic factor homolog of Drosophila erecta (Fruit fly).